The sequence spans 461 residues: ATP synthase subunit beta 2 (461 aa).

ATP is bound at residue Gly151–Thr158.

Belongs to the ATPase alpha/beta chains family. In terms of assembly, F-type ATPases have 2 components, CF(1) - the catalytic core - and CF(0) - the membrane proton channel. CF(1) has five subunits: alpha(3), beta(3), gamma(1), delta(1), epsilon(1). CF(0) has three main subunits: a(1), b(2) and c(9-12). The alpha and beta chains form an alternating ring which encloses part of the gamma chain. CF(1) is attached to CF(0) by a central stalk formed by the gamma and epsilon chains, while a peripheral stalk is formed by the delta and b chains.

It is found in the cell inner membrane. The catalysed reaction is ATP + H2O + 4 H(+)(in) = ADP + phosphate + 5 H(+)(out). Its function is as follows. Produces ATP from ADP in the presence of a proton gradient across the membrane. The catalytic sites are hosted primarily by the beta subunits. The sequence is that of ATP synthase subunit beta 2 from Pseudoalteromonas atlantica (strain T6c / ATCC BAA-1087).